We begin with the raw amino-acid sequence, 122 residues long: Large ribosomal subunit protein uL18 (122 aa).

It belongs to the universal ribosomal protein uL18 family. Part of the 50S ribosomal subunit; part of the 5S rRNA/L5/L18/L25 subcomplex. Contacts the 5S and 23S rRNAs.

Its function is as follows. This is one of the proteins that bind and probably mediate the attachment of the 5S RNA into the large ribosomal subunit, where it forms part of the central protuberance. This Lachnoclostridium phytofermentans (strain ATCC 700394 / DSM 18823 / ISDg) (Clostridium phytofermentans) protein is Large ribosomal subunit protein uL18.